Here is a 227-residue protein sequence, read N- to C-terminus: ATP-dependent dethiobiotin synthetase BioD (227 aa).

Residue 13–18 coordinates ATP; it reads DIGKTY. Residue threonine 17 participates in Mg(2+) binding. Lysine 38 is an active-site residue. Serine 42 provides a ligand contact to substrate. ATP-binding positions include aspartate 55, 116-119, and 179-180; these read EGSG and NN. Positions 55 and 116 each coordinate Mg(2+).

It belongs to the dethiobiotin synthetase family. As to quaternary structure, homodimer. Mg(2+) is required as a cofactor.

The protein localises to the cytoplasm. The enzyme catalyses (7R,8S)-7,8-diammoniononanoate + CO2 + ATP = (4R,5S)-dethiobiotin + ADP + phosphate + 3 H(+). The protein operates within cofactor biosynthesis; biotin biosynthesis; biotin from 7,8-diaminononanoate: step 1/2. Its function is as follows. Catalyzes a mechanistically unusual reaction, the ATP-dependent insertion of CO2 between the N7 and N8 nitrogen atoms of 7,8-diaminopelargonic acid (DAPA, also called 7,8-diammoniononanoate) to form a ureido ring. The chain is ATP-dependent dethiobiotin synthetase BioD from Clostridium botulinum (strain Eklund 17B / Type B).